A 101-amino-acid polypeptide reads, in one-letter code: Protein S100-A7A (101 aa).

EF-hand domains follow at residues 13–48 (MIDMFHKYTGRDGKIEKPSLLTMMKENFPNFLSACD) and 50–85 (KGIHYLATVFEKKDKNEDKKIDFSEFLSLLGDIAAD). Residues histidine 18, glutamate 28, and glutamate 38 each coordinate Zn(2+). 2 residues coordinate Ca(2+): aspartate 63 and asparagine 65. Residue glutamate 66 participates in Zn(2+) binding. The Ca(2+) site is built by aspartate 67, lysine 69, and glutamate 74. Positions 87 and 91 each coordinate Zn(2+).

This sequence belongs to the S-100 family. As to expression, overexpressed in psoriasis.

It localises to the cytoplasm. May be involved in epidermal differentiation and inflammation and might therefore be important for the pathogenesis of psoriasis and other diseases. The sequence is that of Protein S100-A7A (S100A7A) from Homo sapiens (Human).